The chain runs to 23 residues: Conotoxin Tx6.5 (23 aa).

Disulfide bonds link Cys2-Cys10, Cys5-Cys15, and Cys9-Cys20. Position 12 is a 4-hydroxyproline; partial (Pro12).

The protein belongs to the conotoxin U superfamily. As to expression, expressed by the venom duct.

The protein resides in the secreted. This chain is Conotoxin Tx6.5, found in Conus textile (Cloth-of-gold cone).